The primary structure comprises 612 residues: Membrane protein insertase YidC (612 aa).

A run of 7 helical transmembrane segments spans residues asparagine 4 to histidine 24, leucine 329 to phenylalanine 349, valine 358 to leucine 378, isoleucine 434 to leucine 454, phenylalanine 484 to threonine 504, leucine 524 to leucine 544, and tyrosine 546 to valine 566.

This sequence belongs to the OXA1/ALB3/YidC family. Type 1 subfamily. As to quaternary structure, interacts with the Sec translocase complex via SecD. Specifically interacts with transmembrane segments of nascent integral membrane proteins during membrane integration.

Its subcellular location is the cell inner membrane. In terms of biological role, required for the insertion and/or proper folding and/or complex formation of integral membrane proteins into the membrane. Involved in integration of membrane proteins that insert both dependently and independently of the Sec translocase complex, as well as at least some lipoproteins. Aids folding of multispanning membrane proteins. The protein is Membrane protein insertase YidC of Azobacteroides pseudotrichonymphae genomovar. CFP2.